The following is a 360-amino-acid chain: Homoserine O-acetyltransferase (360 aa).

Positions 41 to 344 constitute an AB hydrolase-1 domain; sequence NAILICHALT…DYGHDAFLVD (304 aa). The active-site Nucleophile is serine 144. A substrate-binding site is contributed by arginine 213. Active-site residues include aspartate 305 and histidine 338. Position 339 (aspartate 339) interacts with substrate.

Belongs to the AB hydrolase superfamily. MetX family. As to quaternary structure, homodimer.

It is found in the cytoplasm. It carries out the reaction L-homoserine + acetyl-CoA = O-acetyl-L-homoserine + CoA. The protein operates within amino-acid biosynthesis; L-methionine biosynthesis via de novo pathway; O-acetyl-L-homoserine from L-homoserine: step 1/1. In terms of biological role, transfers an acetyl group from acetyl-CoA to L-homoserine, forming acetyl-L-homoserine. In Pasteurella multocida (strain Pm70), this protein is Homoserine O-acetyltransferase.